We begin with the raw amino-acid sequence, 1263 residues long: MRGLPRGRGLMRARGRGRAAPTGGRGRGRGGAHRGRGRPRSLLSLPRAQASWAPQLPAGLTGPPVPCLPSQGEAPAEMGALLLEKEPRGAAERVHSSLGDTPQSEETLPKANPDSLEPAGPSSPASVTVTVGDEGADTPVGAASLIGDEPESLEGDGGRIVLGHATKSFPSSPSKGGACPSRAKMSMTGAGKSPPSVQSLAMRLLSMPGAQGAATAGPEPSPATTAAQEGQPKVHRARKTMSKPSNGQPPIPEKRPPEVQHFRMSDDMHLGKVTSDVAKRRKLNSGSLSEDLGSAGGSGDIILEKGEPRPLEEWETVVGDDFSLYYDAYSVDERVDSDSKSEVEALAEQLSEEEEEEEEEEEEEEEEEEEEEEEEEDEESGNQSDRSGSSGRRKAKKKWRKDSPWVKPSRKRRKREPPRAKEPRGVNGVGSSGPSEYMEVPLGSLELPSEGTLSPNHAGVSNDTSSLETERGFEELPLCSCRMEAPKIDRISERAGHKCMATESVDGELLGCNAAILKRETMRPSSRVALMVLCEAHRARMVKHHCCPGCGYFCTAGTFLECHPDFRVAHRFHKACVSQLNGMVFCPHCGEDASEAQEVTIPRGDGGTPPIGTAAPALPPLAHDAPGRADTSQPSARMRGHGEPRRPPCDPLADTIDSSGPSLTLPNGGCLSAVGLPPGPGREALEKALVIQESERRKKLRFHPRQLYLSVKQGELQKVILMLLDNLDPNFQSDQQSKRTPLHAAAQKGSVEICHVLLQAGANINAVDKQQRTPLMEAVVNNHLEVARYMVQLGGCVYSKEEDGSTCLHHAAKIGNLEMVSLLLSTGQVDVNAQDSGGWTPIIWAAEHKHIDVIRMLLTRGADVTLTDNEENICLHWASFTGSAAIAEVLLNAQCDLHAVNYHGDTPLHIAARESYHDCVLLFLSRGANPELRNKEGDTAWDLTPERSDVWFALQLNRKLRLGVGNRAVRTEKIICRDVARGYENVPIPCVNGVDGEPCPEDYKYISENCETSTMNIDRNITHLQHCTCVDDCSSSNCLCGQLSIRCWYDKDGRLLQEFNKIEPPLIFECNQACSCWRSCKNRVVQSGIKVRLQLYRTAKMGWGVRALQTIPQGTFICEYVGELISDAEADVREDDSYLFDLDNKDGEVYCIDARYYGNISRFINHLCDPNIIPVRVFMLHQDLRFPRIAFFSSRDIRTGEELGFDYGDRFWDIKSKYFTCQCGSEKCKHSAEAIALEQSRLARLDPHPELLPDLSSLPPINT.

Disordered regions lie at residues 1-314 (MRGL…LEEW) and 332-439 (DERV…EYME). Over residues 26–39 (GRGRGGAHRGRGRP) the composition is skewed to basic residues. R40 carries the asymmetric dimethylarginine modification. Positions 83–95 (LEKEPRGAAERVH) are enriched in basic and acidic residues. S97 carries the post-translational modification Phosphoserine. T101 carries the phosphothreonine modification. S104 and S193 each carry phosphoserine. At K239 the chain carries N6,N6,N6-trimethyllysine; by EHMT2; alternate. N6,N6-dimethyllysine; by EHMT2; alternate is present on K239. Positions 252–270 (PEKRPPEVQHFRMSDDMHL) are enriched in basic and acidic residues. Residues K272 and K282 each participate in a glycyl lysine isopeptide (Lys-Gly) (interchain with G-Cter in SUMO2) cross-link. Phosphoserine occurs at positions 285, 294, and 298. Basic and acidic residues-rich tracts occupy residues 302 to 312 (ILEKGEPRPLE) and 332 to 343 (DERVDSDSKSEV). The segment covering 350 to 380 (LSEEEEEEEEEEEEEEEEEEEEEEEEEDEES) has biased composition (acidic residues). The segment covering 391–400 (GRRKAKKKWR) has biased composition (basic residues). A phosphoserine mark is found at S403, S465, and S466. The residue at position 608 (T608) is a Phosphothreonine. Residues 621–647 (LAHDAPGRADTSQPSARMRGHGEPRRP) form a disordered region. Residue K687 forms a Glycyl lysine isopeptide (Lys-Gly) (interchain with G-Cter in SUMO2) linkage. ANK repeat units follow at residues 702–731 (FHPRQLYLSVKQGELQKVILMLLDNLDPNF), 737–766 (SKRTPLHAAAQKGSVEICHVLLQAGANINA), 770–799 (QQRTPLMEAVVNNHLEVARYMVQLGGCVYS), 803–833 (DGSTCLHHAAKIGNLEMVSLLLSTGQVDVNA), 837–866 (GGWTPIIWAAEHKHIDVIRMLLTRGADVTL), 870–899 (EENICLHWASFTGSAAIAEVLLNAQCDLHA), and 903–932 (HGDTPLHIAARESYHDCVLLFLSRGANPEL). Residues 870–872 (EEN) form a histone H3K9me binding region. Positions 1025–1088 (QHCTCVDDCS…SCKNRVVQSG (64 aa)) constitute a Pre-SET domain. Residues C1027, C1029, C1033, C1038, C1040, C1070, C1074, C1076, and C1080 each coordinate Zn(2+). The SET domain maps to 1091–1208 (VRLQLYRTAK…TGEELGFDYG (118 aa)). S-adenosyl-L-methionine-binding positions include 1101–1103 (MGW), Y1138, and 1165–1166 (NH). Residues 1127-1146 (DAEADVREDDSYLFDLDNKD) form an interaction with histone H3 region. Zn(2+) is bound at residue C1168. The tract at residues 1207 to 1210 (YGDR) is interaction with histone H3. A Post-SET domain is found at 1217-1233 (KYFTCQCGSEKCKHSAE). C1221, C1223, and C1228 together coordinate Zn(2+). Position 1257 is a phosphoserine (S1257). A Phosphothreonine modification is found at T1263.

It belongs to the class V-like SAM-binding methyltransferase superfamily. Histone-lysine methyltransferase family. Suvar3-9 subfamily. Heterodimer; heterodimerizes with EHMT1/GLP. Interacts with GFI1B and WIZ. Part of the E2F6.com-1 complex in G0 phase composed of E2F6, MGA, MAX, TFDP1, CBX3, BAT8, EHMT1, RING1, RNF2, MBLR, L3MBTL2 and YAF2. Part of a complex composed of TRIM28, HDAC1, HDAC2 and EHMT2. Interacts with UHRF1. Interacts with CDYL. Interacts with REST only in the presence of CDYL. Part of a complex containing at least CDYL, REST, WIZ, SETB1, EHMT1 and EHMT2. Interacts with PRDM9 and CDYL; interaction only takes place when PRDM9 is bound to hotspot DNA. Interacts with SMYD5. Methylated at Lys-239; automethylated. As to expression, ubiquitous.

Its subcellular location is the nucleus. The protein resides in the chromosome. The catalysed reaction is N(6)-methyl-L-lysyl(9)-[histone H3] + S-adenosyl-L-methionine = N(6),N(6)-dimethyl-L-lysyl(9)-[histone H3] + S-adenosyl-L-homocysteine + H(+). It catalyses the reaction L-lysyl(9)-[histone H3] + S-adenosyl-L-methionine = N(6)-methyl-L-lysyl(9)-[histone H3] + S-adenosyl-L-homocysteine + H(+). Its function is as follows. Histone methyltransferase that specifically mono- and dimethylates 'Lys-9' of histone H3 (H3K9me1 and H3K9me2, respectively) in euchromatin. H3K9me represents a specific tag for epigenetic transcriptional repression by recruiting HP1 proteins to methylated histones. Also mediates monomethylation of 'Lys-56' of histone H3 (H3K56me1) in G1 phase, leading to promote interaction between histone H3 and PCNA and regulating DNA replication. Also weakly methylates 'Lys-27' of histone H3 (H3K27me). Also required for DNA methylation, the histone methyltransferase activity is not required for DNA methylation, suggesting that these 2 activities function independently. Probably targeted to histone H3 by different DNA-binding proteins like E2F6, MGA, MAX and/or DP1. May also methylate histone H1. In addition to the histone methyltransferase activity, also methylates non-histone proteins: mediates dimethylation of 'Lys-373' of p53/TP53. Also methylates CDYL, WIZ, ACIN1, DNMT1, HDAC1, ERCC6, KLF12 and itself. The polypeptide is Histone-lysine N-methyltransferase EHMT2 (Ehmt2) (Mus musculus (Mouse)).